The sequence spans 123 residues: MSKEEIIQAIKGMSVLELNELVKACEEEFGVSAAAPVAVAGGAAAGGGDAAEEKTEFDVVLKASGSEKIKVIKAVREVTGLGLKEAKALVDGAPKPLKEAVSKEDAEAIKAKFEEIGAEIELK.

Belongs to the bacterial ribosomal protein bL12 family. Homodimer. Part of the ribosomal stalk of the 50S ribosomal subunit. Forms a multimeric L10(L12)X complex, where L10 forms an elongated spine to which 2 to 4 L12 dimers bind in a sequential fashion. Binds GTP-bound translation factors.

In terms of biological role, forms part of the ribosomal stalk which helps the ribosome interact with GTP-bound translation factors. Is thus essential for accurate translation. This chain is Large ribosomal subunit protein bL12, found in Clostridium kluyveri (strain NBRC 12016).